Reading from the N-terminus, the 82-residue chain is Small ribosomal subunit protein bS18 (82 aa).

Positions 1–20 (MAEVSSSTVRRPFHRRRKTC) are disordered.

This sequence belongs to the bacterial ribosomal protein bS18 family. In terms of assembly, part of the 30S ribosomal subunit. Forms a tight heterodimer with protein bS6.

Its function is as follows. Binds as a heterodimer with protein bS6 to the central domain of the 16S rRNA, where it helps stabilize the platform of the 30S subunit. The sequence is that of Small ribosomal subunit protein bS18 from Allorhizobium ampelinum (strain ATCC BAA-846 / DSM 112012 / S4) (Agrobacterium vitis (strain S4)).